Reading from the N-terminus, the 198-residue chain is MYYPEPIARLIESFSKLPGIGQKTATRLAFYTIGMEDQDVNEFAKNLLSAKRDLRFCSICGNLTESDPCAICTDPTRDRTTILVVEESKDVLAMEKIREYRGLYHVLHGTISPMNGISPDEINVKSLITRLMDSEVKEVIIATNATSDGEATAMYLARMIKPAGIKVTRLARGLAVGSDIEYADEVTLSKAVENRLEI.

The C4-type zinc finger occupies 57–72; the sequence is CSICGNLTESDPCAIC. The 96-residue stretch at 80 to 175 folds into the Toprim domain; that stretch reads TTILVVEESK…KVTRLARGLA (96 aa).

The protein belongs to the RecR family.

May play a role in DNA repair. It seems to be involved in an RecBC-independent recombinational process of DNA repair. It may act with RecF and RecO. The polypeptide is Recombination protein RecR (Lactococcus lactis subsp. cremoris (strain MG1363)).